The chain runs to 689 residues: tRNA wybutosine-synthesizing protein 4 (689 aa).

The disordered stretch occupies residues 1 to 33; sequence MTSTSKLDANQLARQRKKLEKDRRKKVYDDQQV. Positions 14–26 are enriched in basic residues; sequence RQRKKLEKDRRKK. Residues Arg-84, Gly-111, Asp-137, 183–184, and Glu-215 contribute to the S-adenosyl-L-methionine site; that span reads DL.

It belongs to the methyltransferase superfamily. LCMT family.

It catalyses the reaction 7-[(3S)-3-amino-3-carboxypropyl]wyosine(37) in tRNA(Phe) + S-adenosyl-L-methionine = 7-[(3S)-(3-amino-3-methoxycarbonyl)propyl]wyosine(37) in tRNA(Phe) + S-adenosyl-L-homocysteine. It carries out the reaction 7-[(3S)-(3-amino-3-methoxycarbonyl)propyl]wyosine(37) in tRNA(Phe) + S-adenosyl-L-methionine + CO2 = wybutosine(37) in tRNA(Phe) + S-adenosyl-L-homocysteine + 2 H(+). It participates in tRNA modification; wybutosine-tRNA(Phe) biosynthesis. Probable S-adenosyl-L-methionine-dependent methyltransferase that acts as a component of the wybutosine biosynthesis pathway. Wybutosine is a hyper modified guanosine with a tricyclic base found at the 3'-position adjacent to the anticodon of eukaryotic phenylalanine tRNA. May methylate the carboxyl group of leucine residues to form alpha-leucine ester residues. The sequence is that of tRNA wybutosine-synthesizing protein 4 (PPM2) from Candida albicans (strain SC5314 / ATCC MYA-2876) (Yeast).